A 274-amino-acid chain; its full sequence is Proteasome subunit beta type-7-B (274 aa).

The propeptide at 1–37 (MSQSSVDIPPKGGFSFDLCKRNDMLTQKGLKAPSFLK) is removed in mature form. Thr-40 acts as the Nucleophile in catalysis.

Belongs to the peptidase T1B family. As to quaternary structure, component of the 20S core complex of the 26S proteasome. The 26S proteasome is composed of a core protease (CP), known as the 20S proteasome, capped at one or both ends by the 19S regulatory particle (RP/PA700). The 20S proteasome core is composed of 28 subunits that are arranged in four stacked rings, resulting in a barrel-shaped structure. The two end rings are each formed by seven alpha subunits, and the two central rings are each formed by seven beta subunits. The catalytic chamber with the active sites is on the inside of the barrel.

It is found in the cytoplasm. The protein resides in the nucleus. It catalyses the reaction Cleavage of peptide bonds with very broad specificity.. Functionally, the proteasome is a multicatalytic proteinase complex which is characterized by its ability to cleave peptides with Arg, Phe, Tyr, Leu, and Glu adjacent to the leaving group at neutral or slightly basic pH. The proteasome has an ATP-dependent proteolytic activity. This chain is Proteasome subunit beta type-7-B (PBB2), found in Arabidopsis thaliana (Mouse-ear cress).